A 345-amino-acid polypeptide reads, in one-letter code: Ferrochelatase (345 aa).

The Fe cation site is built by His199 and Glu302.

The protein belongs to the ferrochelatase family.

It localises to the cytoplasm. It carries out the reaction heme b + 2 H(+) = protoporphyrin IX + Fe(2+). It participates in porphyrin-containing compound metabolism; protoheme biosynthesis; protoheme from protoporphyrin-IX: step 1/1. In terms of biological role, catalyzes the ferrous insertion into protoporphyrin IX. This is Ferrochelatase from Porphyromonas gingivalis (strain ATCC 33277 / DSM 20709 / CIP 103683 / JCM 12257 / NCTC 11834 / 2561).